The sequence spans 277 residues: 2,3,4,5-tetrahydropyridine-2,6-dicarboxylate N-succinyltransferase (277 aa).

2 residues coordinate substrate: Arg-106 and Asp-143.

The protein belongs to the transferase hexapeptide repeat family. Homotrimer.

The protein localises to the cytoplasm. The catalysed reaction is (S)-2,3,4,5-tetrahydrodipicolinate + succinyl-CoA + H2O = (S)-2-succinylamino-6-oxoheptanedioate + CoA. Its pathway is amino-acid biosynthesis; L-lysine biosynthesis via DAP pathway; LL-2,6-diaminopimelate from (S)-tetrahydrodipicolinate (succinylase route): step 1/3. In Xylella fastidiosa (strain Temecula1 / ATCC 700964), this protein is 2,3,4,5-tetrahydropyridine-2,6-dicarboxylate N-succinyltransferase.